Reading from the N-terminus, the 965-residue chain is Isoleucine--tRNA ligase (965 aa).

The 'HIGH' region motif lies at 68 to 78 (PYANGSLHMGH). L-isoleucyl-5'-AMP is bound at residue glutamate 582. Residues 623–627 (KMSKS) carry the 'KMSKS' region motif. Lysine 626 lines the ATP pocket. Residues cysteine 936, cysteine 939, cysteine 956, and cysteine 959 each coordinate Zn(2+).

It belongs to the class-I aminoacyl-tRNA synthetase family. IleS type 1 subfamily. Monomer. Zn(2+) is required as a cofactor.

The protein resides in the cytoplasm. It carries out the reaction tRNA(Ile) + L-isoleucine + ATP = L-isoleucyl-tRNA(Ile) + AMP + diphosphate. In terms of biological role, catalyzes the attachment of isoleucine to tRNA(Ile). As IleRS can inadvertently accommodate and process structurally similar amino acids such as valine, to avoid such errors it has two additional distinct tRNA(Ile)-dependent editing activities. One activity is designated as 'pretransfer' editing and involves the hydrolysis of activated Val-AMP. The other activity is designated 'posttransfer' editing and involves deacylation of mischarged Val-tRNA(Ile). In Prochlorococcus marinus subsp. pastoris (strain CCMP1986 / NIES-2087 / MED4), this protein is Isoleucine--tRNA ligase.